The primary structure comprises 76 residues: Esculentin-2MT3 (76 aa).

The signal sequence occupies residues 1 to 22 (MFTLKKSMLLLFFLGTISLSLC). Positions 23-37 (EEERNADEDDGEKEV) are cleaved as a propeptide — removed in mature form. Cysteine 70 and cysteine 76 are joined by a disulfide.

This sequence belongs to the frog skin active peptide (FSAP) family. Esculentin subfamily. In terms of tissue distribution, expressed by the skin glands.

It localises to the secreted. Antimicrobial peptide. This Amolops mantzorum (Sichuan torrent frog) protein is Esculentin-2MT3.